Here is a 262-residue protein sequence, read N- to C-terminus: Granzyme A (262 aa).

A signal peptide spans 1–26; that stretch reads MRNSYRFLASSLSVVVSLLLIPEDVC. A propeptide spans 27–28 (activation peptide); it reads EK. The Peptidase S1 domain occupies 29–259; it reads IIGGNEVTPH…HLNWIIMTIK (231 aa). Cys-54 and Cys-70 are joined by a disulfide. Residues His-69 and Asp-114 each act as charge relay system in the active site. 3 disulfide bridges follow: Cys-148–Cys-218, Cys-179–Cys-197, and Cys-208–Cys-234. N-linked (GlcNAc...) asparagine glycosylation is present at Asn-170. Ser-212 (charge relay system) is an active-site residue.

This sequence belongs to the peptidase S1 family. Granzyme subfamily. In terms of assembly, homodimer; disulfide-linked. Interacts with APEX1.

Its subcellular location is the secreted. It is found in the cytoplasmic granule. It catalyses the reaction Hydrolysis of proteins, including fibronectin, type IV collagen and nucleolin. Preferential cleavage: -Arg-|-Xaa-, -Lys-|-Xaa- &gt;&gt; -Phe-|-Xaa- in small molecule substrates.. Abundant protease in the cytosolic granules of cytotoxic T-cells and NK-cells which activates caspase-independent pyroptosis when delivered into the target cell through the immunological synapse. It cleaves after Lys or Arg. Once delivered into the target cell, acts by catalyzing cleavage of gasdermin-B (GSDMB), releasing the pore-forming moiety of GSDMB, thereby triggering pyroptosis and target cell death. Cleaves APEX1 after 'Lys-31' and destroys its oxidative repair activity. Cleaves the nucleosome assembly protein SET after 'Lys-189', which disrupts its nucleosome assembly activity and allows the SET complex to translocate into the nucleus to nick and degrade the DNA. This is Granzyme A from Homo sapiens (Human).